The primary structure comprises 248 residues: MKILLTNDDGVHSPGLAALIKKVSEVAEVVVVAPDREQSAVSHALTLHHPLRAARIGANVFSVEGTPTDCVNLGIHSLLSYRPDLVISGVNRGANIADDVTYSGTVAAALEATLMGIPAIAVSLVTRSAGEHFEAAAACAAKLAVTVHQKGLPRDTYLNVNVPDLPAESLLPPLITCQGKRSYEGTIVDKVDPRGRNYYWIGTTDLSFEDIPGTDYHAVSRGHVSISPLHIDLTNHASIEMLKSWELP.

A divalent metal cation contacts are provided by aspartate 8, aspartate 9, serine 39, and asparagine 91.

The protein belongs to the SurE nucleotidase family. A divalent metal cation is required as a cofactor.

It localises to the cytoplasm. The enzyme catalyses a ribonucleoside 5'-phosphate + H2O = a ribonucleoside + phosphate. Functionally, nucleotidase that shows phosphatase activity on nucleoside 5'-monophosphates. The polypeptide is 5'-nucleotidase SurE (Citrifermentans bemidjiense (strain ATCC BAA-1014 / DSM 16622 / JCM 12645 / Bem) (Geobacter bemidjiensis)).